The following is a 259-amino-acid chain: 3-methyl-2-oxobutanoate hydroxymethyltransferase (259 aa).

Mg(2+) is bound by residues D44 and D83. 3-methyl-2-oxobutanoate is bound by residues 44–45, D83, and K112; that span reads DS. E114 provides a ligand contact to Mg(2+). E177 acts as the Proton acceptor in catalysis.

Belongs to the PanB family. In terms of assembly, homodecamer; pentamer of dimers. Mg(2+) is required as a cofactor.

The protein resides in the cytoplasm. The catalysed reaction is 3-methyl-2-oxobutanoate + (6R)-5,10-methylene-5,6,7,8-tetrahydrofolate + H2O = 2-dehydropantoate + (6S)-5,6,7,8-tetrahydrofolate. The protein operates within cofactor biosynthesis; (R)-pantothenate biosynthesis; (R)-pantoate from 3-methyl-2-oxobutanoate: step 1/2. Functionally, catalyzes the reversible reaction in which hydroxymethyl group from 5,10-methylenetetrahydrofolate is transferred onto alpha-ketoisovalerate to form ketopantoate. This is 3-methyl-2-oxobutanoate hydroxymethyltransferase from Nitratiruptor sp. (strain SB155-2).